A 158-amino-acid polypeptide reads, in one-letter code: NAD(P)H-quinone oxidoreductase subunit J, chloroplastic (158 aa).

It belongs to the complex I 30 kDa subunit family. NDH is composed of at least 16 different subunits, 5 of which are encoded in the nucleus.

The protein localises to the plastid. The protein resides in the chloroplast thylakoid membrane. The catalysed reaction is a plastoquinone + NADH + (n+1) H(+)(in) = a plastoquinol + NAD(+) + n H(+)(out). It catalyses the reaction a plastoquinone + NADPH + (n+1) H(+)(in) = a plastoquinol + NADP(+) + n H(+)(out). Functionally, NDH shuttles electrons from NAD(P)H:plastoquinone, via FMN and iron-sulfur (Fe-S) centers, to quinones in the photosynthetic chain and possibly in a chloroplast respiratory chain. The immediate electron acceptor for the enzyme in this species is believed to be plastoquinone. Couples the redox reaction to proton translocation, and thus conserves the redox energy in a proton gradient. This chain is NAD(P)H-quinone oxidoreductase subunit J, chloroplastic, found in Platanus occidentalis (Sycamore).